Reading from the N-terminus, the 488-residue chain is Spermatogenesis-associated protein 6 (488 aa).

An N-terminal signal peptide occupies residues 1-17 (MPKVKALQCALALEIRS). A disordered region spans residues 176 to 225 (HGRLQCRTSRSQKKKSKSPERSKYCINTKNYEQPTISSKSHSPSPYTKRR). The segment covering 200–220 (CINTKNYEQPTISSKSHSPSP) has biased composition (polar residues). Phosphoserine occurs at positions 217 and 219. A Glycyl lysine isopeptide (Lys-Gly) (interchain with G-Cter in SUMO2) cross-link involves residue lysine 248. Phosphoserine is present on residues serine 265, serine 274, serine 325, serine 343, serine 346, serine 354, serine 424, serine 465, and serine 487.

It belongs to the SPATA6 family. As to quaternary structure, interacts with MYL6. Specifically expressed in developing spermatids and mature spermatozoa (at protein level). Isoform 1 is weakly expressed in testis, ovary, thymus and placenta. Isoform 2 and isoform 3 are testis-specific. Expression isw higher in spermatids than in spermatocytes and spermatogonia.

The protein localises to the secreted. It is found in the cell projection. The protein resides in the cilium. It localises to the flagellum. In terms of biological role, required for formation of the sperm connecting piece during spermiogenesis. Sperm connecting piece is essential for linking the developing flagellum to the head during late spermiogenesis. May be involved in myosin-based microfilament transport through interaction with myosin subunits. In Mus musculus (Mouse), this protein is Spermatogenesis-associated protein 6.